The chain runs to 119 residues: Ribonuclease P protein component (119 aa).

It belongs to the RnpA family. As to quaternary structure, consists of a catalytic RNA component (M1 or rnpB) and a protein subunit.

The enzyme catalyses Endonucleolytic cleavage of RNA, removing 5'-extranucleotides from tRNA precursor.. RNaseP catalyzes the removal of the 5'-leader sequence from pre-tRNA to produce the mature 5'-terminus. It can also cleave other RNA substrates such as 4.5S RNA. The protein component plays an auxiliary but essential role in vivo by binding to the 5'-leader sequence and broadening the substrate specificity of the ribozyme. The polypeptide is Ribonuclease P protein component (Streptococcus gordonii (strain Challis / ATCC 35105 / BCRC 15272 / CH1 / DL1 / V288)).